Consider the following 279-residue polypeptide: Bifunctional protein FolD (279 aa).

NADP(+)-binding positions include 166–168 (GRS) and serine 191.

The protein belongs to the tetrahydrofolate dehydrogenase/cyclohydrolase family. In terms of assembly, homodimer.

It catalyses the reaction (6R)-5,10-methylene-5,6,7,8-tetrahydrofolate + NADP(+) = (6R)-5,10-methenyltetrahydrofolate + NADPH. The enzyme catalyses (6R)-5,10-methenyltetrahydrofolate + H2O = (6R)-10-formyltetrahydrofolate + H(+). The protein operates within one-carbon metabolism; tetrahydrofolate interconversion. Functionally, catalyzes the oxidation of 5,10-methylenetetrahydrofolate to 5,10-methenyltetrahydrofolate and then the hydrolysis of 5,10-methenyltetrahydrofolate to 10-formyltetrahydrofolate. The polypeptide is Bifunctional protein FolD (Shouchella clausii (strain KSM-K16) (Alkalihalobacillus clausii)).